The sequence spans 640 residues: MTETRPNRLLDAIDTPSDLKGRSRADLKQIAAEVREEVVDVVSVTGGHLGSGLGVVELTVAIHSVFDTPDDKLVWDVGHQCYPHKILTGRKDRMRTLRQGGGLSGFTKRSESEYDPFGAAHASTSISAGLGFAKSRDLQNKDNHVICVIGDGSMSAGMAYEAMNNAGADRSRMIVILNDNDMSIAPPVGAMSHYFSRLVSSRPYRGLRRIAKKVVQPMGLESPARRAEEYLRGFAMGGTLFEEMGFYYIGPVDGHDLDTLLDLLENIKAMQDGPILLHVVTQKGKGYAPAENSADKYHGVSKFSVVTGEQAKGAGGPPSYQKVFGQTLAKLGETDDKICAITAAMPSGTSTDIFGKKFPDRHFDVGIAEQHAVTFAAGLAADGMKPFCAIYSTFLQRGYDQVVHDVAIQQLPVRFAIDRAGLVGADGATHAGSFDIGYLGALPGFVCMAPSDEAELARMVLTSLEIDDRPSAVRYPRGEGVGVVIPDLLKPLEIGKGRVVREGTSIAILSYGTRLQEALKAAEMLAAQGLSATVADARFAKPLDNELIERLAREHEVLVTIEEGSRGGFGSFVLEHLANCGGLDAGLKVRVMTLPDVFQDHDTPAAMYDQAGLTARHIAARAIEALGRGDLSAIERLASA.

Thiamine diphosphate contacts are provided by residues His79 and 120-122 (AHA). Asp151 is a binding site for Mg(2+). Thiamine diphosphate contacts are provided by residues 152-153 (GS), Asn180, Tyr287, and Glu369. Asn180 contributes to the Mg(2+) binding site.

It belongs to the transketolase family. DXPS subfamily. As to quaternary structure, homodimer. Mg(2+) serves as cofactor. The cofactor is thiamine diphosphate.

It catalyses the reaction D-glyceraldehyde 3-phosphate + pyruvate + H(+) = 1-deoxy-D-xylulose 5-phosphate + CO2. It participates in metabolic intermediate biosynthesis; 1-deoxy-D-xylulose 5-phosphate biosynthesis; 1-deoxy-D-xylulose 5-phosphate from D-glyceraldehyde 3-phosphate and pyruvate: step 1/1. Functionally, catalyzes the acyloin condensation reaction between C atoms 2 and 3 of pyruvate and glyceraldehyde 3-phosphate to yield 1-deoxy-D-xylulose-5-phosphate (DXP). This chain is 1-deoxy-D-xylulose-5-phosphate synthase, found in Hyphomonas neptunium (strain ATCC 15444).